The sequence spans 1458 residues: MGSTTQMSDYLVSTTTTSSASSMVTMTSQIENNSLNSNDNTNTTNNNNNNNNNNNNNNNNNNNNNNNNNINNNNNNGGMVGVNHKTHKKTASIGGGKNRAILHDFTFSYFIPNQNRSEDNSNENELGLNNHNVQHQGPIIHLTKNLLHFYKKCNSNFNYISSLNPRRVLTHPSEPLSNDGYDNVNSDYIVYVNDIITNNESGQKYKVLDSLGQGTFGQVVKCKNCDTDELVAIKILKNKQAYFQQGRLEIQTLKSLNDQHDPEDKNHILRLLDSFIHKMHLCIVFELLSVNLFELIKQNNFRGLSTNLIKVFLIQILDALIVLANANIIHCDLKPENILLQNVNSPAIKIIDFGSACYEKSTLYTYIQSRHYRSPEVLVGTVYCASIDMWSLGCISAELFLGLPLFPGNSEYNQISRIVEMRGIFPSDLLDKGKSSTRYFHRHLGSNSDDNNNNNNNNNGKPYYYTLKSEEDYQRDSKTTLLPSKKYFNYKTLPEIIQNYGFKKSMSPQDIEKEKQHRIVFTDFINGLLQLDPNERWSPMQAKEHPFITGQPYNGPFIPDPSKKRHFTYSQPKQIPQHSMLNGNQILNQHQLFQQLQQQQQQQQQQQQQQQQQQQQQQQQQQQQQQHNQFQQQQQQQQQQQQSSSQQHIQIQPLQLFSTPYTSTNNTPNLSSSNSGSSLNNLKKLNLPPFKQQQQQQFSTSQNSDSFNFPNESFSPRGIYIPSSASNIQQQQQPININNNQNGVGSQVSQLALGQSPSLFGTPTNIYPPYSSMYNNSPVATPNSLSFYGSSWGSDSSSISLNPSTPTQKQMFQQQQYSNNNNNNNNNNNNNSNNNNGNNTNNINSNNNNNNVNRRNRSKSDIPSDSFSSSEGMDPQFNLYQQQQQQQQQQQQQQQQQQQQQQQQQQQQQQQQQQLQYQQQFQTLQDLNIEGEKPPIYPNSPHRKRSHSGYLDQYANGYNSQQTNNTQQQQQQQQQQQQQQQQQQQQQQHPSFFSTRMHLDHFNGGSRYRSQSYGDQQFQQQQYKQQQKNLHHQQQQQQRFMQVGSPPTSHLSPPIPQSPLMMSQPLHQTYIPQQQQQQQQQQQQSQPTPFTPQMISQEPISPALMGDASSIWNPSPTEELLFTIDLPNQQNTPHLTPSNSSTNLLGKSASSPLKNSSGGAIPPTPTIPINMEEINNGFSKFHFNDQPSWNSNGNSPWMIQQQQQHQQGFNGNSESMYNDDLIGFSPYNNYSNDYRPQLFNKQSPPSSYNSNKSFYGGSGGGGNNNNNNNSRPTNQNFSNSLLPSQQQNVIFPQNSPPSSYNSSNSLSKSGGNTVKNNSNTGGRPRGDSMKQRFNSTNNLLSGGSYQYQQQQQQQQQQQQQQQQQQQQQQQQQQQQQQQYKKDTPSLMMSPPMNGLKTSSEIGIPSEEIRYQYQQQQLQQQFQQQQQQQQQQQIQQQLQQQQAPPQNRKQVVIGSYRET.

The span at 32–76 (NNSLNSNDNTNTTNNNNNNNNNNNNNNNNNNNNNNNNNINNNNNN) shows a compositional bias: low complexity. Positions 32–83 (NNSLNSNDNTNTTNNNNNNNNNNNNNNNNNNNNNNNNNINNNNNNGGMVGVN) are disordered. In terms of domain architecture, Protein kinase spans 205–548 (YKVLDSLGQG…PMQAKEHPFI (344 aa)). ATP-binding positions include 211 to 219 (LGQGTFGQV) and Lys234. The active-site Proton acceptor is Asp332. Disordered stretches follow at residues 441–462 (HRHLGSNSDDNNNNNNNNNGKP) and 545–571 (HPFITGQPYNGPFIPDPSKKRHFTYSQ). Residues 446–459 (SNSDDNNNNNNNNN) are compositionally biased toward low complexity. Residues 588-643 (NQHQLFQQLQQQQQQQQQQQQQQQQQQQQQQQQQQQQQQHNQFQQQQQQQQQQQQS) are a coiled coil. 4 stretches are compositionally biased toward low complexity: residues 659–709 (TPYT…SFNF), 791–800 (SWGSDSSSIS), 808–853 (QKQM…NNVN), and 861–870 (DIPSDSFSSS). Disordered regions lie at residues 659–714 (TPYT…NESF) and 791–874 (SWGS…EGMD). The stretch at 878–927 (NLYQQQQQQQQQQQQQQQQQQQQQQQQQQQQQQQQQQLQYQQQFQTLQDL) forms a coiled coil. 5 disordered regions span residues 930–1095 (EGEK…PQMI), 1128–1161 (NQQNTPHLTPSNSSTNLLGKSASSPLKNSSGGAI), 1233–1347 (DYRP…SYQY), 1375–1399 (QQQQYKKDTPSLMMSPPMNGLKTSS), and 1435–1458 (QQLQQQQAPPQNRKQVVIGSYRET). Composition is skewed to low complexity over residues 961-988 (QQTNNTQQQQQQQQQQQQQQQQQQQQQQ), 1016-1042 (QQFQQQQYKQQQKNLHHQQQQQQRFMQ), and 1064-1093 (QPLHQTYIPQQQQQQQQQQQQSQPTPFTPQ). 2 stretches are compositionally biased toward polar residues: residues 1128–1158 (NQQNTPHLTPSNSSTNLLGKSASSPLKNSSG) and 1233–1245 (DYRPQLFNKQSPP). 2 stretches are compositionally biased toward low complexity: residues 1246–1255 (SSYNSNKSFY) and 1264–1279 (NNNNNNSRPTNQNFSN). Residues 1280-1291 (SLLPSQQQNVIF) show a composition bias toward polar residues. The span at 1292 to 1309 (PQNSPPSSYNSSNSLSKS) shows a compositional bias: low complexity. Polar residues-rich tracts occupy residues 1310–1321 (GGNTVKNNSNTG) and 1331–1344 (QRFNSTNNLLSGGS). 2 coiled-coil regions span residues 1346–1383 (QYQQQQQQQQQQQQQQQQQQQQQQQQQQQQQQQYKKDT) and 1409–1442 (RYQYQQQQLQQQFQQQQQQQQQQQIQQQLQQQQA).

The protein belongs to the protein kinase superfamily. CMGC Ser/Thr protein kinase family. MNB/DYRK subfamily.

It localises to the cytoplasm. The enzyme catalyses L-seryl-[protein] + ATP = O-phospho-L-seryl-[protein] + ADP + H(+). It catalyses the reaction L-threonyl-[protein] + ATP = O-phospho-L-threonyl-[protein] + ADP + H(+). The catalysed reaction is L-tyrosyl-[protein] + ATP = O-phospho-L-tyrosyl-[protein] + ADP + H(+). In terms of biological role, general sensor of environmental conditions, such as heat stress, effecting changes through pkaC. Essential for survival to nitrosoative and oxidative stresses. Required for cell cycle control, not only at the onset but also during development (aggregation process and postaggregative development). This is Probable serine/threonine-protein kinase yakA (yakA) from Dictyostelium discoideum (Social amoeba).